Reading from the N-terminus, the 156-residue chain is Gene 55 protein (156 aa).

Residues 132-156 are disordered; the sequence is KRRWSGGNASSHEERMRGPFTEVAE.

The polypeptide is Gene 55 protein (55) (Mycobacterium phage L5 (Mycobacteriophage L5)).